The following is a 115-amino-acid chain: Large ribosomal subunit protein bL19 (115 aa).

The protein belongs to the bacterial ribosomal protein bL19 family.

This protein is located at the 30S-50S ribosomal subunit interface and may play a role in the structure and function of the aminoacyl-tRNA binding site. This chain is Large ribosomal subunit protein bL19, found in Aeromonas hydrophila subsp. hydrophila (strain ATCC 7966 / DSM 30187 / BCRC 13018 / CCUG 14551 / JCM 1027 / KCTC 2358 / NCIMB 9240 / NCTC 8049).